A 97-amino-acid polypeptide reads, in one-letter code: UPF0235 protein Ppha_2415 (97 aa).

It belongs to the UPF0235 family.

This Pelodictyon phaeoclathratiforme (strain DSM 5477 / BU-1) protein is UPF0235 protein Ppha_2415.